A 744-amino-acid polypeptide reads, in one-letter code: Translation initiation factor IF-2, chloroplastic (744 aa).

Positions 113–146 (NSEGSFKSGKQKKKEKGKHKQNVNKDIHHTKNNR) are disordered. Residues 121-134 (GKQKKKEKGKHKQN) show a composition bias toward basic residues. The region spanning 244–417 (NRAPIVTILG…CSLAEFINLK (174 aa)) is the tr-type G domain. Residues 253–260 (GHVDHGKT) are G1. 253-260 (GHVDHGKT) is a binding site for GTP. Residues 278–282 (GITQS) form a G2 region. Residues 303-306 (DTPG) are G3. GTP contacts are provided by residues 303–307 (DTPGH) and 357–360 (NKID). A G4 region spans residues 357–360 (NKID). A G5 region spans residues 393 to 395 (SAL).

This sequence belongs to the TRAFAC class translation factor GTPase superfamily. Classic translation factor GTPase family. IF-2 subfamily.

It is found in the plastid. The protein localises to the chloroplast. One of the essential components for the initiation of protein synthesis. Protects formylmethionyl-tRNA from spontaneous hydrolysis and promotes its binding to the 30S ribosomal subunits. Also involved in the hydrolysis of GTP during the formation of the 70S ribosomal complex. This chain is Translation initiation factor IF-2, chloroplastic (infB), found in Gracilaria tenuistipitata var. liui (Red alga).